The primary structure comprises 89 residues: Translation initiation factor IF-1 1 (89 aa).

Residues 1–73 form the S1-like domain; that stretch reads MSNKEQLIEM…TKGRITFRHL (73 aa).

The protein belongs to the IF-1 family. As to quaternary structure, component of the 30S ribosomal translation pre-initiation complex which assembles on the 30S ribosome in the order IF-2 and IF-3, IF-1 and N-formylmethionyl-tRNA(fMet); mRNA recruitment can occur at any time during PIC assembly.

The protein localises to the cytoplasm. Functionally, one of the essential components for the initiation of protein synthesis. Stabilizes the binding of IF-2 and IF-3 on the 30S subunit to which N-formylmethionyl-tRNA(fMet) subsequently binds. Helps modulate mRNA selection, yielding the 30S pre-initiation complex (PIC). Upon addition of the 50S ribosomal subunit IF-1, IF-2 and IF-3 are released leaving the mature 70S translation initiation complex. The polypeptide is Translation initiation factor IF-1 1 (Acidovorax sp. (strain JS42)).